We begin with the raw amino-acid sequence, 462 residues long: Jasmonoyl--L-amino acid synthetase GH3.3 (462 aa).

Ser103 provides a ligand contact to ATP. Jasmonate is bound at residue Ser106. ATP is bound by residues Thr126, Asn172, and 337 to 342 (GASEGW). 170 to 174 (TTNVY) serves as a coordination point for an L-alpha-amino acid. Jasmonate-binding positions include 334 to 337 (AEYG) and Ser339.

It belongs to the IAA-amido conjugating enzyme family. As to expression, expressed in green shoots and flowers.

It catalyses the reaction a jasmonate + an L-alpha-amino acid + ATP = a jasmonyl-L-amino acid + AMP + diphosphate + H(+). In terms of biological role, catalyzes the synthesis of jasmonate-amino acid conjugates by adenylation. Catalyzes the conjugation of jasmonate (JA) to Ile when expressed in a heterologous system (E.coli). Catalyzes in vitro the conjugation of jasmonate (JA) to Ile, Phe, Leu, Met, Val and Trp. May catalyze the synthesis of indole-3-acetic acid (IAA)-amino acid conjugates, providing a mechanism for the plant to cope with the presence of excess auxin. The protein is Jasmonoyl--L-amino acid synthetase GH3.3 of Oryza sativa subsp. japonica (Rice).